Reading from the N-terminus, the 359-residue chain is Peptide chain release factor 1 (359 aa).

Gln235 carries the post-translational modification N5-methylglutamine.

Belongs to the prokaryotic/mitochondrial release factor family. Methylated by PrmC. Methylation increases the termination efficiency of RF1.

It localises to the cytoplasm. In terms of biological role, peptide chain release factor 1 directs the termination of translation in response to the peptide chain termination codons UAG and UAA. In Ehrlichia ruminantium (strain Gardel), this protein is Peptide chain release factor 1.